Consider the following 145-residue polypeptide: D-aminoacyl-tRNA deacylase (145 aa).

The Gly-cisPro motif, important for rejection of L-amino acids signature appears at 137 to 138 (GP).

Belongs to the DTD family. In terms of assembly, homodimer.

It localises to the cytoplasm. The catalysed reaction is glycyl-tRNA(Ala) + H2O = tRNA(Ala) + glycine + H(+). The enzyme catalyses a D-aminoacyl-tRNA + H2O = a tRNA + a D-alpha-amino acid + H(+). Its function is as follows. An aminoacyl-tRNA editing enzyme that deacylates mischarged D-aminoacyl-tRNAs. Also deacylates mischarged glycyl-tRNA(Ala), protecting cells against glycine mischarging by AlaRS. Acts via tRNA-based rather than protein-based catalysis; rejects L-amino acids rather than detecting D-amino acids in the active site. By recycling D-aminoacyl-tRNA to D-amino acids and free tRNA molecules, this enzyme counteracts the toxicity associated with the formation of D-aminoacyl-tRNA entities in vivo and helps enforce protein L-homochirality. This chain is D-aminoacyl-tRNA deacylase, found in Photorhabdus laumondii subsp. laumondii (strain DSM 15139 / CIP 105565 / TT01) (Photorhabdus luminescens subsp. laumondii).